We begin with the raw amino-acid sequence, 522 residues long: 2-isopropylmalate synthase (522 aa).

The Pyruvate carboxyltransferase domain maps to 5–267; the sequence is VIIFDTTLRD…ETGINAKEIH (263 aa). Mn(2+) contacts are provided by D14, H202, H204, and N238. The segment at 392–522 is regulatory domain; sequence QLQQLVVQSD…MQKNRELGGV (131 aa).

Belongs to the alpha-IPM synthase/homocitrate synthase family. LeuA type 1 subfamily. Homodimer. Mn(2+) serves as cofactor.

Its subcellular location is the cytoplasm. The catalysed reaction is 3-methyl-2-oxobutanoate + acetyl-CoA + H2O = (2S)-2-isopropylmalate + CoA + H(+). It participates in amino-acid biosynthesis; L-leucine biosynthesis; L-leucine from 3-methyl-2-oxobutanoate: step 1/4. Catalyzes the condensation of the acetyl group of acetyl-CoA with 3-methyl-2-oxobutanoate (2-ketoisovalerate) to form 3-carboxy-3-hydroxy-4-methylpentanoate (2-isopropylmalate). The polypeptide is 2-isopropylmalate synthase (Shewanella baltica (strain OS223)).